The primary structure comprises 354 residues: Rhodopsin (354 aa).

At 1–36 (MNGTEGENFYIPMSNKTGVVRSPFDYPQYYLAEPWK) the chain is on the extracellular side. Residues N2 and N15 are each glycosylated (N-linked (GlcNAc...) asparagine). A helical transmembrane segment spans residues 37–61 (FSVLAAYMFFLIIAGFPVNFLTLYV). The Cytoplasmic portion of the chain corresponds to 62-73 (TIQHKKLRQPLN). The helical transmembrane segment at 74 to 96 (YILLNLAVADLFMIFGGFPSTMI) threads the bilayer. The Extracellular segment spans residues 97 to 110 (TSMNGYFVFGPSGC). A disulfide bridge links C110 with C187. The chain crosses the membrane as a helical span at residues 111-133 (NFEGFFATLGGEIGLWSLVVLAI). The 'Ionic lock' involved in activated form stabilization motif lies at 134–136 (ERY). The Cytoplasmic segment spans residues 134 to 152 (ERYVVVCKPMSNFRFGSQH). A helical transmembrane segment spans residues 153–173 (AFMGVGLTWIMAMACAFPPLV). Residues 174–202 (GWSRYIPEGMQCSCGIDYYTLKPEVNNES) are Extracellular-facing. Residue N200 is glycosylated (N-linked (GlcNAc...) asparagine). A helical transmembrane segment spans residues 203 to 224 (FVIYMFVVHFSIPLTIIFFCYG). Topologically, residues 225-252 (RLVCTVKEAAAQQQESETTQRAEREVTR) are cytoplasmic. The chain crosses the membrane as a helical span at residues 253 to 274 (MVIIMVIAFLICWLPYASVAFF). Topologically, residues 275-286 (IFCNQGSEFGPI) are extracellular. Residues 287 to 308 (FMTIPAFFAKAASLYNPLIYIL) traverse the membrane as a helical segment. Residue K296 is modified to N6-(retinylidene)lysine. At 309–354 (MNKQFRNCMITTICCGKNPFEEEESTSASASKTEASSVSSSQVAPA) the chain is on the cytoplasmic side. 2 S-palmitoyl cysteine lipidation sites follow: C322 and C323. A disordered region spans residues 333-354 (STSASASKTEASSVSSSQVAPA). Residues 334-354 (TSASASKTEASSVSSSQVAPA) are compositionally biased toward low complexity.

This sequence belongs to the G-protein coupled receptor 1 family. Opsin subfamily. Post-translationally, phosphorylated on some or all of the serine and threonine residues present in the C-terminal region. In terms of processing, contains one covalently linked retinal chromophore.

It localises to the membrane. The protein localises to the cell projection. The protein resides in the cilium. It is found in the photoreceptor outer segment. In terms of biological role, photoreceptor required for image-forming vision at low light intensity. While most salt water fish species use retinal as chromophore, most freshwater fish use 3-dehydroretinal, or a mixture of retinal and 3-dehydroretinal. Light-induced isomerization of 11-cis to all-trans retinal triggers a conformational change that activates signaling via G-proteins. Subsequent receptor phosphorylation mediates displacement of the bound G-protein alpha subunit by arrestin and terminates signaling. The sequence is that of Rhodopsin (rho) from Scyliorhinus canicula (Small-spotted catshark).